A 505-amino-acid polypeptide reads, in one-letter code: Peroxisome proliferator-activated receptor gamma (505 aa).

Thr84 is a glycosylation site (O-linked (GlcNAc) threonine). Ser112 carries the phosphoserine modification. The nuclear receptor DNA-binding region spans 136–210; that stretch reads AIECRVCGDK…VGMSHNAIRF (75 aa). NR C4-type zinc fingers lie at residues 139–159 and 176–198; these read CRVC…CEGC and CDLN…FQKC. Residues 205–280 form an interaction with FAM120B region; that stretch reads HNAIRFGRMP…DKSPFVIYDM (76 aa). The NR LBD domain occupies 238 to 503; it reads DLRALAKHLY…HPLLQEIYKD (266 aa). Lys252 participates in a covalent cross-link: Glycyl lysine isopeptide (Lys-Gly) (interchain with G-Cter in ubiquitin). Rosiglitazone-binding positions include 314–317, His351, His477, and Tyr501; that span reads QFRS. Positions 495 to 503 match the 9aaTAD motif; sequence PLLQEIYKD.

This sequence belongs to the nuclear hormone receptor family. NR1 subfamily. Interacts with FOXO1 (acetylated form). Heterodimer with other nuclear receptors, such as RXRA. The heterodimer with the retinoic acid receptor RXRA is called adipocyte-specific transcription factor ARF6. Interacts with NCOA6 coactivator, leading to a strong increase in transcription of target genes. Interacts with coactivator PPARBP, leading to a mild increase in transcription of target genes. Interacts with NOCA7 in a ligand-inducible manner. Interacts with NCOA1 and NCOA2 LXXLL motifs. Interacts with ASXL1, ASXL2, DNTTIP2, FAM120B, MAP2K1/MEK1, NR0B2, PDPK1, PRDM16, PRMT2 and TGFB1I1. Interacts (when activated by agonist) with PPP5C. Interacts with HELZ2 and THRAP3; the interaction stimulates the transcriptional activity of PPARG. Interacts with PER2, the interaction is ligand dependent and blocks PPARG recruitment to target promoters. Interacts with NOCT. Interacts with ACTN4. Interacts (when in the liganded conformation) with GPS2. Interacts with CRY1 and CRY2 in a ligand-dependent manner. In the absence of hormonal ligand, interacts with TACC1. In macrophages, interacts with PAQR3 and STUB1; the interactions promote PPARG poylubiquitination and STUB1-mediated degradation. Post-translationally, O-GlcNAcylation at Thr-84 reduces transcriptional activity in adipocytes. In terms of processing, phosphorylated in basal conditions and dephosphorylated when treated with the ligand. May be dephosphorylated by PPP5C. The phosphorylated form may be inactive and dephosphorylation at Ser-112 induces adipogenic activity. Ubiquitinated by E3 ubiquitin-protein ligase complex containing FBXO9; leading to proteasomal degradation. Ubiquitinated at Lys-252 by TRIM55 leading to proteasomal degradation. Ubiquitinated by E3 ubiquitin-protein ligase STUB1/CHIP; leading to proteasomal degradation. Highest expression in adipose tissue. Lower in skeletal muscle, spleen, heart and liver. Also detectable in placenta, lung and ovary.

The protein resides in the nucleus. It is found in the cytoplasm. With respect to regulation, PDPK1 activates its transcriptional activity independently of its kinase activity. Functionally, nuclear receptor that binds peroxisome proliferators such as hypolipidemic drugs and fatty acids. Once activated by a ligand, the nuclear receptor binds to DNA specific PPAR response elements (PPRE) and modulates the transcription of its target genes, such as acyl-CoA oxidase. It therefore controls the peroxisomal beta-oxidation pathway of fatty acids. Key regulator of adipocyte differentiation and glucose homeostasis. ARF6 acts as a key regulator of the tissue-specific adipocyte P2 (aP2) enhancer. Acts as a critical regulator of gut homeostasis by suppressing NF-kappa-B-mediated pro-inflammatory responses. Plays a role in the regulation of cardiovascular circadian rhythms by regulating the transcription of BMAL1 in the blood vessels. (Microbial infection) Upon treatment with M.tuberculosis or its lipoprotein LpqH, phosphorylation of MAPK p38 and IL-6 production are modulated, probably via this protein. The sequence is that of Peroxisome proliferator-activated receptor gamma (PPARG) from Homo sapiens (Human).